The sequence spans 547 residues: Putative cysteine ligase BshC (547 aa).

Residues 461-504 are a coiled coil; that stretch reads ASTEATRSAIMDEMEALKQKVVRAEKRQQDEVRAQLKKAHTNLR.

Belongs to the BshC family.

The polypeptide is Putative cysteine ligase BshC (Salinibacter ruber (strain DSM 13855 / M31)).